The following is a 161-amino-acid chain: 6,7-dimethyl-8-ribityllumazine synthase (161 aa).

5-amino-6-(D-ribitylamino)uracil-binding positions include tryptophan 26, 58 to 60, and 81 to 83; these read AFE and VVI. Residue 86 to 87 coordinates (2S)-2-hydroxy-3-oxobutyl phosphate; it reads GT. Histidine 89 acts as the Proton donor in catalysis. Phenylalanine 114 contacts 5-amino-6-(D-ribitylamino)uracil. Arginine 128 provides a ligand contact to (2S)-2-hydroxy-3-oxobutyl phosphate.

It belongs to the DMRL synthase family.

The catalysed reaction is (2S)-2-hydroxy-3-oxobutyl phosphate + 5-amino-6-(D-ribitylamino)uracil = 6,7-dimethyl-8-(1-D-ribityl)lumazine + phosphate + 2 H2O + H(+). It functions in the pathway cofactor biosynthesis; riboflavin biosynthesis; riboflavin from 2-hydroxy-3-oxobutyl phosphate and 5-amino-6-(D-ribitylamino)uracil: step 1/2. In terms of biological role, catalyzes the formation of 6,7-dimethyl-8-ribityllumazine by condensation of 5-amino-6-(D-ribitylamino)uracil with 3,4-dihydroxy-2-butanone 4-phosphate. This is the penultimate step in the biosynthesis of riboflavin. This is 6,7-dimethyl-8-ribityllumazine synthase from Nocardioides sp. (strain ATCC BAA-499 / JS614).